Here is a 322-residue protein sequence, read N- to C-terminus: Quinolinate synthase (322 aa).

Positions 37 and 54 each coordinate iminosuccinate. [4Fe-4S] cluster is bound at residue C99. Iminosuccinate contacts are provided by residues 125 to 127 (YIN) and S142. C185 is a binding site for [4Fe-4S] cluster. Iminosuccinate is bound by residues 211–213 (HPE) and T228. A [4Fe-4S] cluster-binding site is contributed by C278.

Belongs to the quinolinate synthase family. Type 2 subfamily. It depends on [4Fe-4S] cluster as a cofactor.

It localises to the cytoplasm. It catalyses the reaction iminosuccinate + dihydroxyacetone phosphate = quinolinate + phosphate + 2 H2O + H(+). Its pathway is cofactor biosynthesis; NAD(+) biosynthesis; quinolinate from iminoaspartate: step 1/1. Its function is as follows. Catalyzes the condensation of iminoaspartate with dihydroxyacetone phosphate to form quinolinate. The polypeptide is Quinolinate synthase (Chlorobaculum parvum (strain DSM 263 / NCIMB 8327) (Chlorobium vibrioforme subsp. thiosulfatophilum)).